We begin with the raw amino-acid sequence, 263 residues long: Undecaprenyl-diphosphatase 3 (263 aa).

Helical transmembrane passes span 15–37 (GLTEFLPVSSTGHMILTGHLIGF), 42–62 (AKVFEVVIQLGSILAVVVIFW), 83–103 (LHIIIGMIPAGVLGVLFHSAI), 106–126 (VLFGPGPVVISLVAGGILMIV), 142–162 (ITYKQAFTIGMFQCLALWPGF), 183–203 (AEYTFILAVPMMVAASGLDLI), 216–236 (LFATGFITAFVVAMLAIVSFL), and 242–262 (VKLTPFAYYRFILAAVFYFFI).

The protein belongs to the UppP family.

The protein resides in the cell membrane. The enzyme catalyses di-trans,octa-cis-undecaprenyl diphosphate + H2O = di-trans,octa-cis-undecaprenyl phosphate + phosphate + H(+). Catalyzes the dephosphorylation of undecaprenyl diphosphate (UPP). Confers resistance to bacitracin. This Bacillus thuringiensis subsp. konkukian (strain 97-27) protein is Undecaprenyl-diphosphatase 3.